Reading from the N-terminus, the 111-residue chain is BET1-like protein (111 aa).

Over methionine 1–lysine 86 the chain is Cytoplasmic. Serine 9 and serine 37 each carry phosphoserine. The t-SNARE coiled-coil homology domain occupies glutamate 15–methionine 77. A helical; Anchor for type IV membrane protein membrane pass occupies residues leucine 87–serine 107. Topologically, residues arginine 108–threonine 111 are lumenal.

As to quaternary structure, component of a SNARE complex consisting of STX5, YKT6, GOSR1 and BET1L. Interacts with STX5.

Its subcellular location is the golgi apparatus membrane. The protein resides in the golgi apparatus. It localises to the trans-Golgi network membrane. Vesicle SNARE required for targeting and fusion of retrograde transport vesicles with the Golgi complex. Required for the integrity of the Golgi complex. The polypeptide is BET1-like protein (Homo sapiens (Human)).